The chain runs to 49 residues: Large ribosomal subunit protein bL33 (49 aa).

This sequence belongs to the bacterial ribosomal protein bL33 family.

The sequence is that of Large ribosomal subunit protein bL33 from Clostridium beijerinckii (strain ATCC 51743 / NCIMB 8052) (Clostridium acetobutylicum).